A 204-amino-acid polypeptide reads, in one-letter code: Lymphotoxin-alpha (204 aa).

Residues 1–33 (MTPPGRLYLLRVCSTPPLLLLGLLLALPLEAQG) form the signal peptide. A THD domain is found at 62–204 (PAAHLVGDPS…SSVFFGAFAL (143 aa)). Asparagine 95 is a glycosylation site (N-linked (GlcNAc...) asparagine). Cysteine 119 and cysteine 155 are disulfide-bonded.

The protein belongs to the tumor necrosis factor family. Homotrimer, and heterotrimer of either two LTB and one LTA subunits or (less prevalent) two LTA and one LTB subunits. Interacts with TNFRSF14.

The protein localises to the secreted. It localises to the membrane. Functionally, cytokine that in its homotrimeric form binds to TNFRSF1A/TNFR1, TNFRSF1B/TNFBR and TNFRSF14/HVEM. In its heterotrimeric form with LTB binds to TNFRSF3/LTBR. Lymphotoxin is produced by lymphocytes and is cytotoxic for a wide range of tumor cells in vitro and in vivo. This chain is Lymphotoxin-alpha (LTA), found in Bos taurus (Bovine).